We begin with the raw amino-acid sequence, 733 residues long: Polyribonucleotide nucleotidyltransferase (733 aa).

The interval 404-424 (NYNMPPYSTGETGRVGSPKRR) is disordered. Mg(2+) is bound by residues D516 and D522. The 60-residue stretch at 582–641 (PRIITVHIPVDKIGEVIGPKGKMINQIQDDTGANISIEDDGTIFIGADNGDSAESARSMI) folds into the KH domain. One can recognise an S1 motif domain in the interval 653–725 (GERYLGTVVK…DRGKLSLVLA (73 aa)).

It belongs to the polyribonucleotide nucleotidyltransferase family. Mg(2+) is required as a cofactor.

It localises to the cytoplasm. It catalyses the reaction RNA(n+1) + phosphate = RNA(n) + a ribonucleoside 5'-diphosphate. Involved in mRNA degradation. Catalyzes the phosphorolysis of single-stranded polyribonucleotides processively in the 3'- to 5'-direction. The polypeptide is Polyribonucleotide nucleotidyltransferase (Cutibacterium acnes (strain DSM 16379 / KPA171202) (Propionibacterium acnes)).